The following is a 392-amino-acid chain: 5-azacytidine-induced protein 2 (392 aa).

The interval 1–197 (MDALVEDDIC…IELQKAKQTD (197 aa)) is homodimerization. Coiled-coil stretches lie at residues 40–76 (ALVT…LIAR) and 102–196 (DRDN…AKQT). An interaction with TBK1 and IKBKE region spans residues 216–257 (SDNMQHAYWELKREMSNLHLVTQVQAELLRKLKTSTAIKKAC). A phosphoserine mark is found at Ser318 and Ser353.

In terms of assembly, homodimer. Interacts with IKBKE. Interacts with TBK1. Interacts with TICAM1. Interacts with TAX1BP1. Interacts with CALCOCO2. As to quaternary structure, (Microbial infection) Interacts with vaccinia virus protein C6. Post-translationally, ubiquitinated via 'Lys-48'-linked polyubiquitination by TRIM38, leading to its degradation. As to expression, widely expressed. Abundant expression seen in the pancreas and testis.

It localises to the cytoplasm. In terms of biological role, adapter protein which binds TBK1 and IKBKE playing a role in antiviral innate immunity. Activates serine/threonine-protein kinase TBK1 and facilitates its oligomerization. Enhances the phosphorylation of NF-kappa-B p65 subunit RELA by TBK1. Promotes TBK1-induced as well as TNF-alpha or PMA-induced activation of NF-kappa-B. Participates in IFNB promoter activation via TICAM1. The protein is 5-azacytidine-induced protein 2 (AZI2) of Homo sapiens (Human).